Reading from the N-terminus, the 166-residue chain is Vasopressin-neurophysin 2-copeptin (166 aa).

Positions 1–19 (MPDATLPACFLGLLALTSA) are cleaved as a signal peptide. Cysteines 20 and 25 form a disulfide. At G28 the chain carries Glycine amide. Disulfide bonds link C41/C85, C44/C58, C52/C75, C59/C65, C92/C104, C98/C116, and C105/C110. N133 carries N-linked (GlcNAc...) asparagine glycosylation.

This sequence belongs to the vasopressin/oxytocin family. Interacts with vasopressin receptors V1bR/AVPR1B (Ki=85 pM), V1aR/AVPR1A (Ki=0.6 nM) and V2R/AVPR2 (Ki=4.9 nM). Interacts with oxytocin receptor (OXTR) (Ki=110 nM). Post-translationally, a shorter neurophysin molecule (32-123) is called neurophysin-I and is derived from the complete protein (called neurophysin III) by proteolytic degradation (in vivo or after extraction).

Its subcellular location is the secreted. In terms of biological role, neurophysin 2 specifically binds vasopressin. Vasopressin has a direct antidiuretic action on the kidney, it also causes vasoconstriction of the peripheral vessels. Acts by binding to vasopressin receptors (V1bR/AVPR1B, V1aR/AVPR1A, and V2R/AVPR2). This is Vasopressin-neurophysin 2-copeptin (AVP) from Sus scrofa (Pig).